Reading from the N-terminus, the 97-residue chain is Co-chaperonin GroES (97 aa).

Belongs to the GroES chaperonin family. As to quaternary structure, heptamer of 7 subunits arranged in a ring. Interacts with the chaperonin GroEL.

The protein resides in the cytoplasm. Together with the chaperonin GroEL, plays an essential role in assisting protein folding. The GroEL-GroES system forms a nano-cage that allows encapsulation of the non-native substrate proteins and provides a physical environment optimized to promote and accelerate protein folding. GroES binds to the apical surface of the GroEL ring, thereby capping the opening of the GroEL channel. In Klebsiella pneumoniae (strain 342), this protein is Co-chaperonin GroES.